Reading from the N-terminus, the 252-residue chain is 2-succinyl-6-hydroxy-2,4-cyclohexadiene-1-carboxylate synthase (252 aa).

It belongs to the AB hydrolase superfamily. MenH family. In terms of assembly, monomer.

The enzyme catalyses 5-enolpyruvoyl-6-hydroxy-2-succinyl-cyclohex-3-ene-1-carboxylate = (1R,6R)-6-hydroxy-2-succinyl-cyclohexa-2,4-diene-1-carboxylate + pyruvate. It participates in quinol/quinone metabolism; 1,4-dihydroxy-2-naphthoate biosynthesis; 1,4-dihydroxy-2-naphthoate from chorismate: step 3/7. It functions in the pathway quinol/quinone metabolism; menaquinone biosynthesis. In terms of biological role, catalyzes a proton abstraction reaction that results in 2,5-elimination of pyruvate from 2-succinyl-5-enolpyruvyl-6-hydroxy-3-cyclohexene-1-carboxylate (SEPHCHC) and the formation of 2-succinyl-6-hydroxy-2,4-cyclohexadiene-1-carboxylate (SHCHC). The polypeptide is 2-succinyl-6-hydroxy-2,4-cyclohexadiene-1-carboxylate synthase (Salmonella enteritidis PT4 (strain P125109)).